Consider the following 63-residue polypeptide: Sperm protamine P1 (63 aa).

The disordered stretch occupies residues 1-63 (MARYRRHSRS…RYSRRGRRRY (63 aa)).

The protein belongs to the protamine P1 family. Testis.

The protein localises to the nucleus. Its subcellular location is the chromosome. Protamines substitute for histones in the chromatin of sperm during the haploid phase of spermatogenesis. They compact sperm DNA into a highly condensed, stable and inactive complex. The chain is Sperm protamine P1 (PRM1) from Sminthopsis bindi (Kakadu dunnart).